A 337-amino-acid chain; its full sequence is Serpentine receptor class delta-18 (337 aa).

6 helical membrane-spanning segments follow: residues 2 to 22 (IIFF…LNLL), 90 to 110 (VGLS…LLSF), 130 to 150 (LILV…TIFA), 187 to 207 (IYSI…IFIL), 236 to 256 (ALTI…FYFL), and 270 to 290 (SIYA…LYFV).

Belongs to the nematode receptor-like protein srd family.

The protein resides in the membrane. In Caenorhabditis elegans, this protein is Serpentine receptor class delta-18 (srd-18).